Here is a 563-residue protein sequence, read N- to C-terminus: uncharacterized protein (563 aa).

Residues 30 to 303 (QSIEIQPEEK…EKSPEKQVEI (274 aa)) form a disordered region. Basic and acidic residues predominate over residues 36 to 56 (PEEKPSEEKQPEEKSSEEKPK). Residues 61-72 (SAINSEKTQKPI) show a composition bias toward polar residues. Basic and acidic residues-rich tracts occupy residues 101-115 (TTERPQPKTTMDDKQ), 123-276 (ERGR…EPRP), and 282-303 (EKSPDEHQEKHQEKSPEKQVEI).

This sequence belongs to the mimivirus L41 family.

This is an uncharacterized protein from Acanthamoeba polyphaga (Amoeba).